Consider the following 114-residue polypeptide: KPKEDKEWVKFKAKHITSQSVADFNCNKTMNDPDFTPDGQCKPVNTFIHSNTGPVKDICRRASGRVNKSSTQQFPLTTCNKPIRCKYSQSNTTNFICITCRDNYPVHFVKIGKC.

The active-site Proton acceptor is H15. Disulfide bonds link C26–C79, C41–C85, C59–C100, and C97–C114. N-linked (GlcNAc...) asparagine glycosylation is present at N27. Residue 42–46 (KPVNT) participates in substrate binding. N67 and N91 each carry an N-linked (GlcNAc...) asparagine glycan. Catalysis depends on H107, which acts as the Proton donor.

The protein belongs to the pancreatic ribonuclease family. Monomer. There are at least five different forms arising from glycan heterogeneity.

The protein localises to the secreted. In terms of biological role, endonuclease, hydrolyzes highly polymerized RNA, poly(U) and poly(C), and the dinucleotides CpA and UpA. Hydrolyzes rCA, rUA and rUG. Has cytotoxic activity against cultured human submaxillary gland carcinoma cells. The chain is Amphinase-4 from Lithobates pipiens (Northern leopard frog).